The sequence spans 211 residues: Large ribosomal subunit protein uL3 (211 aa).

Gln150 carries the N5-methylglutamine modification.

It belongs to the universal ribosomal protein uL3 family. As to quaternary structure, part of the 50S ribosomal subunit. Forms a cluster with proteins L14 and L19. Post-translationally, methylated by PrmB.

Its function is as follows. One of the primary rRNA binding proteins, it binds directly near the 3'-end of the 23S rRNA, where it nucleates assembly of the 50S subunit. This chain is Large ribosomal subunit protein uL3, found in Pseudomonas syringae pv. tomato (strain ATCC BAA-871 / DC3000).